The sequence spans 375 residues: Histidine biosynthesis bifunctional protein HisB (375 aa).

The tract at residues 1–168 is histidinol-phosphatase; sequence MTPILFVDRD…GIAHELADAP (168 aa). Aspartate 8 (nucleophile) is an active-site residue. Mg(2+) contacts are provided by aspartate 8, aspartate 10, and aspartate 128. Aspartate 10 acts as the Proton donor in catalysis. An imidazoleglycerol-phosphate dehydratase region spans residues 169 to 375; the sequence is RRAVVQRNTK…TALPTTKGAL (207 aa).

It in the N-terminal section; belongs to the histidinol-phosphatase family. In the C-terminal section; belongs to the imidazoleglycerol-phosphate dehydratase family. Requires Mg(2+) as cofactor.

It localises to the cytoplasm. The enzyme catalyses D-erythro-1-(imidazol-4-yl)glycerol 3-phosphate = 3-(imidazol-4-yl)-2-oxopropyl phosphate + H2O. The catalysed reaction is L-histidinol phosphate + H2O = L-histidinol + phosphate. Its pathway is amino-acid biosynthesis; L-histidine biosynthesis; L-histidine from 5-phospho-alpha-D-ribose 1-diphosphate: step 6/9. The protein operates within amino-acid biosynthesis; L-histidine biosynthesis; L-histidine from 5-phospho-alpha-D-ribose 1-diphosphate: step 8/9. The protein is Histidine biosynthesis bifunctional protein HisB of Xanthomonas euvesicatoria pv. vesicatoria (strain 85-10) (Xanthomonas campestris pv. vesicatoria).